The sequence spans 228 residues: MDQLKRMAAEAAAEYVKDGMKIGLGSGSTVFEFVRVLGEKAKEGLNIQAVAASRKTEALAKACGIHIIDFPTMEKLEVAFDGADEIAPGLMLLKGGGGSLLREKLVAAAAKRLVVLADESKLVEELGAFKLPVEIIPFGWETTAMRIEALGGVASLRQTGKSPFVSDNHNWILDCDFGNIRDPYSLHEKVKKLVGVVETGLFLDMACEAIVASKNGIHHITKGDEFNV.

Residues 26 to 29 (SGST), 81 to 84 (DGAD), and 94 to 97 (KGGG) contribute to the substrate site. The active-site Proton acceptor is the Glu103. Lys121 contacts substrate.

Belongs to the ribose 5-phosphate isomerase family. Homodimer.

The catalysed reaction is aldehydo-D-ribose 5-phosphate = D-ribulose 5-phosphate. The protein operates within carbohydrate degradation; pentose phosphate pathway; D-ribose 5-phosphate from D-ribulose 5-phosphate (non-oxidative stage): step 1/1. Functionally, catalyzes the reversible conversion of ribose-5-phosphate to ribulose 5-phosphate. This chain is Ribose-5-phosphate isomerase A, found in Shouchella clausii (strain KSM-K16) (Alkalihalobacillus clausii).